The following is a 162-amino-acid chain: uncharacterized protein (162 aa).

The N-terminal stretch at 1-34 is a signal peptide; the sequence is MRKKNNIKKWLLIIAGFLIICIITLFVMVSGNKV.

This is an uncharacterized protein from Bacillus subtilis (strain 168).